Consider the following 149-residue polypeptide: Transcriptional repressor NrdR (149 aa).

A zinc finger lies at cysteine 3–cysteine 34. One can recognise an ATP-cone domain in the interval proline 49–glutamate 139.

It belongs to the NrdR family. The cofactor is Zn(2+).

Functionally, negatively regulates transcription of bacterial ribonucleotide reductase nrd genes and operons by binding to NrdR-boxes. This chain is Transcriptional repressor NrdR, found in Cronobacter sakazakii (strain ATCC BAA-894) (Enterobacter sakazakii).